A 275-amino-acid polypeptide reads, in one-letter code: Lectin (275 aa).

Residues 1-30 (MASLQTQMISFYAIFLSILLTTILFFKVNS) form the signal peptide. Residues glutamate 149 and aspartate 151 each contribute to the Mn(2+) site. Residues aspartate 151, phenylalanine 153, asparagine 155, and aspartate 159 each contribute to the Ca(2+) site. Mn(2+)-binding residues include aspartate 159 and histidine 166. Asparagine 217 is a glycosylation site (N-linked (GlcNAc...) asparagine).

It belongs to the leguminous lectin family. As to quaternary structure, tetramer of two alpha and two beta chains.

Its function is as follows. D-mannose specific lectin. In Pisum sativum (Garden pea), this protein is Lectin (LECA).